We begin with the raw amino-acid sequence, 175 residues long: Regenerating islet-derived protein 3-alpha (175 aa).

An N-terminal signal peptide occupies residues 1 to 26; sequence MLPPMALPSVSWMLLSCLMLLSQVQG. Residues 27-37 constitute a propeptide that is removed on maturation; sequence EEPQRELPSAR. Intrachain disulfides connect Cys40–Cys51, Cys68–Cys171, and Cys146–Cys163. The 126-residue stretch at 47–172 folds into the C-type lectin domain; that stretch reads YGSHCYALFL…CNVRLPYVCK (126 aa). Zn(2+) is bound by residues His50 and His107. Residues 103-118 form a sufficient to activate EXTL3 region; that stretch reads WIGLHDPTQGTEPNGE. The EPN signature appears at 114 to 116; the sequence is EPN. Zn(2+) contacts are provided by Glu121 and His145.

In terms of assembly, forms a hexameric membrane-permeabilizing oligomeric pore on membrane phospholipids. The hexamer is formed by three dimers related by helical symmetry. Forms filaments, filamentation traps pore complexes and limits damage to host cells. Interacts with EXTL3. In terms of processing, proteolytic processing by trypsin removes an inhibitory N-terminal propeptide and is essential for peptidoglycan binding and antibacterial activity. Expressed by keratinocytes. Highly expressed in epidermal keratinocytes of psoriasis patients (at protein level). Constitutively expressed in intestine. Low expression is found in healthy pancreas. Overexpressed during the acute phase of pancreatitis and in some patients with chronic pancreatitis.

Its subcellular location is the secreted. Its activity is regulated as follows. Lipopolysaccharide inhibits pore-forming activity, explaining why is bactericidal for Gram-positive but not Gram-negative bacteria. Its function is as follows. Bactericidal C-type lectin which acts exclusively against Gram-positive bacteria and mediates bacterial killing by binding to surface-exposed carbohydrate moieties of peptidoglycan. Binds membrane phospholipids and kills bacteria by forming a hexameric membrane-permeabilizing oligomeric pore. Functionally, acts as a hormone in response to different stimuli like anti-inflammatory signals, such as IL17A, or gut microbiome. Secreted by different cell types to activate its receptor EXTL3 and induce cell specific signaling pathways. Induced by IL17A in keratinocytes, regulates keratinocyte proliferation and differentiation after skin injury via activation of EXTL3-PI3K-AKT signaling pathway. In parallel, inhibits skin inflammation through the inhibition of inflammatory cytokines such as IL6 and TNF. In pancreas, is able to permealize beta-cells membrane and stimulate their proliferation. Has bacteriostatic activity. The polypeptide is Regenerating islet-derived protein 3-alpha (Homo sapiens (Human)).